Consider the following 471-residue polypeptide: Adenosylhomocysteinase (471 aa).

Substrate is bound by residues threonine 60, aspartate 135, and glutamate 196. Position 197–199 (197–199) interacts with NAD(+); it reads TTT. 2 residues coordinate substrate: lysine 226 and aspartate 230. NAD(+)-binding positions include asparagine 231, 260-265, glutamate 283, asparagine 318, 339-341, and asparagine 387; these read GYGDVG and IGH.

This sequence belongs to the adenosylhomocysteinase family. NAD(+) is required as a cofactor.

Its subcellular location is the cytoplasm. The catalysed reaction is S-adenosyl-L-homocysteine + H2O = L-homocysteine + adenosine. Its pathway is amino-acid biosynthesis; L-homocysteine biosynthesis; L-homocysteine from S-adenosyl-L-homocysteine: step 1/1. In terms of biological role, may play a key role in the regulation of the intracellular concentration of adenosylhomocysteine. The protein is Adenosylhomocysteinase of Chlorobium phaeobacteroides (strain DSM 266 / SMG 266 / 2430).